We begin with the raw amino-acid sequence, 224 residues long: Probable Brix domain-containing ribosomal biogenesis protein (224 aa).

Residues 1 to 196 (MMLITTSHRP…IWIMEDGRRW (196 aa)) enclose the Brix domain.

Functionally, probably involved in the biogenesis of the ribosome. This Pyrococcus horikoshii (strain ATCC 700860 / DSM 12428 / JCM 9974 / NBRC 100139 / OT-3) protein is Probable Brix domain-containing ribosomal biogenesis protein.